Reading from the N-terminus, the 276-residue chain is Acetyl-coenzyme A carboxylase carboxyl transferase subunit beta (276 aa).

The region spanning 24–276 (LWRECSNCHE…NNLLNLHSDK (253 aa)) is the CoA carboxyltransferase N-terminal domain. Cysteine 28, cysteine 31, cysteine 46, and cysteine 49 together coordinate Zn(2+). Residues 28–49 (CSNCHEKFYYRRAGVYEVCPNC) form a C4-type zinc finger.

This sequence belongs to the AccD/PCCB family. Acetyl-CoA carboxylase is a heterohexamer composed of biotin carboxyl carrier protein (AccB), biotin carboxylase (AccC) and two subunits each of ACCase subunit alpha (AccA) and ACCase subunit beta (AccD). Requires Zn(2+) as cofactor.

The protein localises to the cytoplasm. It catalyses the reaction N(6)-carboxybiotinyl-L-lysyl-[protein] + acetyl-CoA = N(6)-biotinyl-L-lysyl-[protein] + malonyl-CoA. Its pathway is lipid metabolism; malonyl-CoA biosynthesis; malonyl-CoA from acetyl-CoA: step 1/1. Component of the acetyl coenzyme A carboxylase (ACC) complex. Biotin carboxylase (BC) catalyzes the carboxylation of biotin on its carrier protein (BCCP) and then the CO(2) group is transferred by the transcarboxylase to acetyl-CoA to form malonyl-CoA. This is Acetyl-coenzyme A carboxylase carboxyl transferase subunit beta from Pediococcus pentosaceus (strain ATCC 25745 / CCUG 21536 / LMG 10740 / 183-1w).